A 153-amino-acid polypeptide reads, in one-letter code: Aspartate carbamoyltransferase regulatory chain (153 aa).

Zn(2+) contacts are provided by cysteine 108, cysteine 113, cysteine 137, and cysteine 140.

This sequence belongs to the PyrI family. In terms of assembly, contains catalytic and regulatory chains. Zn(2+) serves as cofactor.

In terms of biological role, involved in allosteric regulation of aspartate carbamoyltransferase. This chain is Aspartate carbamoyltransferase regulatory chain, found in Methanosphaera stadtmanae (strain ATCC 43021 / DSM 3091 / JCM 11832 / MCB-3).